We begin with the raw amino-acid sequence, 131 residues long: Phosphoribosyl-AMP cyclohydrolase (131 aa).

Residue aspartate 89 coordinates Mg(2+). Cysteine 90 lines the Zn(2+) pocket. Aspartate 91 and aspartate 93 together coordinate Mg(2+). Cysteine 106 and cysteine 113 together coordinate Zn(2+).

It belongs to the PRA-CH family. In terms of assembly, homodimer. Requires Mg(2+) as cofactor. Zn(2+) is required as a cofactor.

It is found in the cytoplasm. It carries out the reaction 1-(5-phospho-beta-D-ribosyl)-5'-AMP + H2O = 1-(5-phospho-beta-D-ribosyl)-5-[(5-phospho-beta-D-ribosylamino)methylideneamino]imidazole-4-carboxamide. It functions in the pathway amino-acid biosynthesis; L-histidine biosynthesis; L-histidine from 5-phospho-alpha-D-ribose 1-diphosphate: step 3/9. Catalyzes the hydrolysis of the adenine ring of phosphoribosyl-AMP. The polypeptide is Phosphoribosyl-AMP cyclohydrolase (Pyrobaculum aerophilum (strain ATCC 51768 / DSM 7523 / JCM 9630 / CIP 104966 / NBRC 100827 / IM2)).